The chain runs to 102 residues: Small ribosomal subunit protein uS10 (102 aa).

This sequence belongs to the universal ribosomal protein uS10 family. As to quaternary structure, part of the 30S ribosomal subunit.

Its function is as follows. Involved in the binding of tRNA to the ribosomes. This chain is Small ribosomal subunit protein uS10, found in Methylobacterium radiotolerans (strain ATCC 27329 / DSM 1819 / JCM 2831 / NBRC 15690 / NCIMB 10815 / 0-1).